The following is a 371-amino-acid chain: Solute carrier family 35 member F6 (371 aa).

The signal sequence occupies residues 1-18 (MAWTKYQLFLAGLMLVTG). The next 2 helical transmembrane spans lie at 48–68 (FLQAVGMFLGEFSCLAAFYLL) and 89–109 (LLFLPPALCDMTGTSLMYVAL). One can recognise an EamA domain in the interval 104–160 (LMYVALNMTSASSFQMLRGAVIIFTGLFSVAFLGRRLVLSQWLGILATIAGLVVVGL). Asparagine 110 carries N-linked (GlcNAc...) asparagine glycosylation. 7 helical membrane passes run 117-137 (FQMLRGAVIIFTGLFSVAFLG), 140-160 (LVLSQWLGILATIAGLVVVGL), 176-196 (VITGDLLIIMAQIIVAIQMVL), 216-236 (GLFGFVILSLLLVPMYYIPAG), 261-281 (LIAVALLGNISSIAFFNFAGI), 295-312 (LDSLRTVVIWALSLALGW), and 317-336 (ALQILGFLILLIGTALYNGL). A disordered region spans residues 352–371 (EESEQERLLGGTRTPINDAS). Residue threonine 365 is modified to Phosphothreonine.

This sequence belongs to the SLC35F solute transporter family. As to quaternary structure, interacts with SLC25A5. Expressed in pancreatic ductal adenocarcinoma (PDAC) (at protein level). Strongly expressed in prostate and thyroid. Weakly expressed in lung, heart, liver and kidney.

The protein localises to the mitochondrion. The protein resides in the lysosome membrane. In terms of biological role, involved in the maintenance of mitochondrial membrane potential in pancreatic ductal adenocarcinoma (PDAC) cells. Promotes pancreatic ductal adenocarcinoma (PDAC) cell growth. May play a role as a nucleotide-sugar transporter. This chain is Solute carrier family 35 member F6 (SLC35F6), found in Homo sapiens (Human).